An 89-amino-acid chain; its full sequence is uncharacterized protein (89 aa).

3 consecutive transmembrane segments (helical) span residues 5 to 25 (AYLV…KRKA), 36 to 56 (RLWL…MQTF), and 67 to 87 (YGVP…YSPF).

It localises to the cell membrane. This is an uncharacterized protein from Bacillus subtilis (strain 168).